A 1311-amino-acid chain; its full sequence is MAEKTNGAAAPNGAADAPKSSPEQAQDVADVPVTDENGEQIPEDTVLSLTIVLPQNSEKIPIAVSPHEQVHEVRQSIIEMPNALQYSCFHLEHKGERINDFAQISEIKDIADGDEIHLVEDPYTEKEARIHLIRVRELIGAAGDRTDSVQGILPGLSVYDTVAAEARNATEVGEYEFNAGPNVKALLPKENDPQPKTVKAIQVSPWNPPPAHFRQKGHLLYLIITTNEGEQFQITGHVGGFFVNKSSNSKFDPLPRAGPKAYAAHSLLTLIEQLSPAFSKAFAELQEYTNQREPLSTFQITNAIPAAPWLVPSANSAACTHTPDITRTQESFLVSGVENTDTLRDWNEEFQSAKELPKDGVQDRVFRERLISKLFADYNDAAARGAVLVARGEVAPLNPTEGKDAQIFVYNNVFFSFGADGVGTFTSEGGDEAARVATAKDVSGVKLVNQLDIDGLYTPGTVVVDYLGKRIVGQSIVPGIFKQREPGENQIDYGAVDGKDLVATDERFVPQFQKLSKALKVKPHAVWDKEGKRHDLEGSVETKGLVGTDGRKYVLDLYRITPLDVSWQEEVEAESDAPEYPHRMTVLRPELVELFVRQKMREWVSSEVAKRGQAKKDQAAVEEKKEAKAESEEDSDSSSEEESSSDESDSEESSSDEDEEEEKKPKKKSVPKKAAKKEEVKEEKKDEKEASSDRIDVSDFSFTLNPDVFSGQVPQTDAEKEAMAADEKDVRDACEYLRKTAIPDLLNDLRESEISFPMDGQSLSRLLHKRGINLRYLGQIATASDGPRLQCLKEVSVREMIARGFKHVAAKHLRYLPLPLTSSCISHLLNCLLGTAFNAKPTAEIDPSIRSLYDDADLAFENVTPEILRTAIQEEVARRFRYTLASDWYNNLPHLHMLREVCLKLGIQMQHKEFIFTAEGAASQPAPVPVTNGNGNAPAEGSKKNKKKKKAARDTSPDSVTSSSTIPHTFVPDDIINVVPIVKDSSPRSVLAEEALEAGRISILQNQRKIGQELLLESLSLHEQIYGILHPEVARVYHSLAMLYFQLEEKDAAVELARKAVIVAERTIGVDSQETLLDYLNLSLFLYQLGDSKQALEFTKHALNMWKIIYGPDHPDMITTINNAAVMLQQLKEYHESRRWFEEALRICEVVFGRQSVNSATLLFQLAQALALDQEPKAAVVKMKESYNIFLAELGPEDKNTKEAEGWLEQLTTNAVSIAKHAKDVEERRLRAGIRFTPRAGAIGSTSTAANKVAKSEIERPAAASSMDSRSIDELLKFIEGTDKQKKPAAKKRTGRANPKRRGAEPVSTKA.

Low complexity predominate over residues 1 to 18; it reads MAEKTNGAAAPNGAADAP. The interval 1 to 27 is disordered; it reads MAEKTNGAAAPNGAADAPKSSPEQAQD. A Clu domain is found at 324–568; sequence DITRTQESFL…RITPLDVSWQ (245 aa). The TPR 1 repeat unit spans residues 491-525; sequence IDYGAVDGKDLVATDERFVPQFQKLSKALKVKPHA. Basic and acidic residues predominate over residues 606-630; that stretch reads SEVAKRGQAKKDQAAVEEKKEAKAE. Disordered regions lie at residues 606-694 and 925-966; these read SEVA…SSDR and PAPV…SSTI. A compositionally biased stretch (acidic residues) spans 631–661; sequence SEEDSDSSSEEESSSDESDSEESSSDEDEEE. The span at 665 to 675 shows a compositional bias: basic residues; sequence PKKKSVPKKAA. The segment covering 676–694 has biased composition (basic and acidic residues); sequence KKEEVKEEKKDEKEASSDR. 3 TPR repeats span residues 1034-1067, 1076-1109, and 1118-1151; these read ARVY…AERT, LLDY…WKII, and ITTI…CEVV. The span at 1276–1286 shows a compositional bias: basic and acidic residues; the sequence is LKFIEGTDKQK. The interval 1276–1311 is disordered; it reads LKFIEGTDKQKKPAAKKRTGRANPKRRGAEPVSTKA. Basic residues predominate over residues 1287 to 1301; it reads KPAAKKRTGRANPKR.

The protein belongs to the CLU family. May associate with the eukaryotic translation initiation factor 3 (eIF-3) complex.

It localises to the cytoplasm. MRNA-binding protein involved in proper cytoplasmic distribution of mitochondria. The chain is Clustered mitochondria protein homolog from Pyricularia oryzae (strain 70-15 / ATCC MYA-4617 / FGSC 8958) (Rice blast fungus).